The sequence spans 495 residues: Putative aldehyde dehydrogenase DhaS (495 aa).

Residue 244-249 (GSTEIG) coordinates NAD(+). Catalysis depends on residues E266 and C300.

This sequence belongs to the aldehyde dehydrogenase family.

It carries out the reaction an aldehyde + NAD(+) + H2O = a carboxylate + NADH + 2 H(+). The sequence is that of Putative aldehyde dehydrogenase DhaS (dhaS) from Bacillus subtilis (strain 168).